A 270-amino-acid polypeptide reads, in one-letter code: MIKSIILQAIMVLSTLTSVHGANSSGCGKQPTLVNGVHKINDREYILKVPDNYNANKPHHLIFGLHWRGGNMNSVVNGESVEPWYGLETRAQGSAILVAPNGRNAGWANINGEDVALIDAIIKQVEDDLCIDQSSRFATGFSWGGGMSYALACARAKEFRAVSVLSGGVISGCEGGHDPIAYLGIHGISDPVLPFDGGVTLANKFAANNGCQQTYVGKPGLGSHSSVQTDFKGCSRPVSFIAYDGGHDAAPLGVGNPLAPDATWKFFMAA.

The N-terminal stretch at 1 to 21 (MIKSIILQAIMVLSTLTSVHG) is a signal peptide. Asn-23 carries an N-linked (GlcNAc...) asparagine glycan.

The protein belongs to the faeC family.

It is found in the secreted. It carries out the reaction feruloyl-polysaccharide + H2O = ferulate + polysaccharide.. Its function is as follows. Involved in degradation of plant cell walls. Hydrolyzes the feruloyl-arabinose ester bond in arabinoxylans, and the feruloyl-galactose ester bond in pectin. Active against paranitrophenyl-acetate, methyl ferulate and wheat arabinoxylan. In Aspergillus oryzae (strain ATCC 42149 / RIB 40) (Yellow koji mold), this protein is Probable feruloyl esterase C (faeC).